The sequence spans 68 residues: uncharacterized protein (68 aa).

This is an uncharacterized protein from Enterobacteria phage T4 (Bacteriophage T4).